The chain runs to 288 residues: Leucine-rich repeat-containing protein 72 (288 aa).

LRR repeat units lie at residues 47–68, 69–90, 91–112, and 113–134; these read DVFE…SRFK, KLKY…TRNY, CLAE…HYLP, and SLHI…VKEL. The LRRCT domain occupies 148–186; sequence NPLCQYNLYRLYIIYHLPGVELLDRNQVTEKERRSMITL.

The sequence is that of Leucine-rich repeat-containing protein 72 (LRRC72) from Bos taurus (Bovine).